Reading from the N-terminus, the 454-residue chain is Serine/threonine-protein phosphatase C23G10.1 (454 aa).

Positions 196, 198, 224, and 256 each coordinate Mn(2+). Catalysis depends on histidine 257, which acts as the Proton donor. Mn(2+)-binding residues include histidine 308 and histidine 382.

This sequence belongs to the PPP phosphatase family. PP-1 subfamily. The cofactor is Mn(2+).

It carries out the reaction O-phospho-L-seryl-[protein] + H2O = L-seryl-[protein] + phosphate. The enzyme catalyses O-phospho-L-threonyl-[protein] + H2O = L-threonyl-[protein] + phosphate. This Caenorhabditis elegans protein is Serine/threonine-protein phosphatase C23G10.1.